Here is a 906-residue protein sequence, read N- to C-terminus: Protein translocase subunit SecA (906 aa).

ATP contacts are provided by residues Gln-86, 104 to 108 (GEGKT), and Asp-511. Composition is skewed to basic and acidic residues over residues 853-865 (HESV…RHDE) and 877-888 (VRREGPKVKRND). The tract at residues 853 to 906 (HESVIDNNQRHDEDEQEEAPKVQQVRREGPKVKRNDPCPCGSGKKYKQCHGKVE) is disordered. Residues Cys-890, Cys-892, Cys-901, and His-902 each contribute to the Zn(2+) site. Residues 896 to 906 (KKYKQCHGKVE) are compositionally biased toward basic residues.

It belongs to the SecA family. In terms of assembly, monomer and homodimer. Part of the essential Sec protein translocation apparatus which comprises SecA, SecYEG and auxiliary proteins SecDF-YajC and YidC. It depends on Zn(2+) as a cofactor.

The protein localises to the cell inner membrane. Its subcellular location is the cytoplasm. The catalysed reaction is ATP + H2O + cellular proteinSide 1 = ADP + phosphate + cellular proteinSide 2.. Part of the Sec protein translocase complex. Interacts with the SecYEG preprotein conducting channel. Has a central role in coupling the hydrolysis of ATP to the transfer of proteins into and across the cell membrane, serving both as a receptor for the preprotein-SecB complex and as an ATP-driven molecular motor driving the stepwise translocation of polypeptide chains across the membrane. This is Protein translocase subunit SecA from Francisella tularensis subsp. holarctica (strain FTNF002-00 / FTA).